An 827-amino-acid polypeptide reads, in one-letter code: MQEKYLFSEIEPKWQKKWVDRKDYQAEEHSDKPKFYALAMFPYPSGNLHMGHVRNYSIVDVIARFKRMRGYNVLHPIGWDSFGLPAENAAIKNQTPPAEWTWKNIANMKRQLQEMGISYDWEREVTTCHPDYYKFTQWIFLEFYKHGLVYKKKAGVNWCPSCATVLANEQVVDGACERCDTAVTKKDLEQWFFKITDYAQVLLDDLEKLPGWPDKVKTMQKNWIGRSEGAEVEFDLENHGDKIRVYTTRVDTIFGVSYVVLAPEHPLVQKLIAGTEYENDVQAFIERMKGLNEIARTSTETEKEGLFTGAYCINPYSGEKVPIWIANYVLFEYGTGAVMGVPAHDERDFEFAGKYKLPIKTVILPEGTPVEEKDTPLQAAFVEEGMMVNSGEYDGLKNVEAWEKMCDKAEHDGFGERKVNFRLRDWLISRQRYWGAPIPMIYCDHCGIVPVPQDQLPVMLPDDVVFKAGENPLTTSESFKQTICPTCGGKARRETDTMDTFMCSSWYFLRYTDPHNAQLPFAKEAADHWMNVDQYVGGVEHAILHLLYSRFFTKALRDFGYLKVDEPFANLLTQGMVCLGGAKMSKSKGNVVSPEEIISKYGADTARLFILFAAPPERDLEWNDQGVEGCYRFLNRVWRLAAQYEEVLKTTGAGANEFGELDKAAKDMRRQTHQTIQRVTSDVGARFNFNTAVSAIMELVNALYLYKEQPQVNLAVAREALESILILLAPFAPHITEEIWSELGHEDSIHSREWPQVDEEALVQEEVTVVLQINGKVKERIQVPAQISAAELEAQVRQLPRLGEWTQGKQILKIVTVPGKLVNVVVK.

A 'HIGH' region motif is present at residues 42 to 52; it reads PYPSGNLHMGH. Residues 583-587 carry the 'KMSKS' region motif; the sequence is KMSKS. Lysine 586 lines the ATP pocket.

The protein belongs to the class-I aminoacyl-tRNA synthetase family.

Its subcellular location is the cytoplasm. The enzyme catalyses tRNA(Leu) + L-leucine + ATP = L-leucyl-tRNA(Leu) + AMP + diphosphate. This is Leucine--tRNA ligase from Desulfitobacterium hafniense (strain DSM 10664 / DCB-2).